Here is a 286-residue protein sequence, read N- to C-terminus: Phosphatidylserine decarboxylase proenzyme (286 aa).

Residues Asp90, His147, and Ser250 each act as charge relay system; for autoendoproteolytic cleavage activity in the active site. Ser250 serves as the catalytic Schiff-base intermediate with substrate; via pyruvic acid; for decarboxylase activity. Ser250 bears the Pyruvic acid (Ser); by autocatalysis mark.

The protein belongs to the phosphatidylserine decarboxylase family. PSD-B subfamily. Prokaryotic type I sub-subfamily. In terms of assembly, heterodimer of a large membrane-associated beta subunit and a small pyruvoyl-containing alpha subunit. It depends on pyruvate as a cofactor. In terms of processing, is synthesized initially as an inactive proenzyme. Formation of the active enzyme involves a self-maturation process in which the active site pyruvoyl group is generated from an internal serine residue via an autocatalytic post-translational modification. Two non-identical subunits are generated from the proenzyme in this reaction, and the pyruvate is formed at the N-terminus of the alpha chain, which is derived from the carboxyl end of the proenzyme. The autoendoproteolytic cleavage occurs by a canonical serine protease mechanism, in which the side chain hydroxyl group of the serine supplies its oxygen atom to form the C-terminus of the beta chain, while the remainder of the serine residue undergoes an oxidative deamination to produce ammonia and the pyruvoyl prosthetic group on the alpha chain. During this reaction, the Ser that is part of the protease active site of the proenzyme becomes the pyruvoyl prosthetic group, which constitutes an essential element of the active site of the mature decarboxylase.

Its subcellular location is the cell membrane. It carries out the reaction a 1,2-diacyl-sn-glycero-3-phospho-L-serine + H(+) = a 1,2-diacyl-sn-glycero-3-phosphoethanolamine + CO2. Its pathway is phospholipid metabolism; phosphatidylethanolamine biosynthesis; phosphatidylethanolamine from CDP-diacylglycerol: step 2/2. Its function is as follows. Catalyzes the formation of phosphatidylethanolamine (PtdEtn) from phosphatidylserine (PtdSer). This is Phosphatidylserine decarboxylase proenzyme from Saccharophagus degradans (strain 2-40 / ATCC 43961 / DSM 17024).